The following is a 162-amino-acid chain: Endoribonuclease YbeY (162 aa).

Zn(2+) is bound by residues His-117, His-121, and His-127.

Belongs to the endoribonuclease YbeY family. It depends on Zn(2+) as a cofactor.

The protein resides in the cytoplasm. Single strand-specific metallo-endoribonuclease involved in late-stage 70S ribosome quality control and in maturation of the 3' terminus of the 16S rRNA. The protein is Endoribonuclease YbeY of Francisella tularensis subsp. holarctica (strain OSU18).